A 239-amino-acid chain; its full sequence is Proteasome subunit beta (239 aa).

Polar residues predominate over residues 1–16; sequence MRQPDSSLPRTGQDHT. The segment at 1–32 is disordered; the sequence is MRQPDSSLPRTGQDHTLSPYEPELGEVPSNDL. The propeptide at 1-44 is removed in mature form; by autocatalysis; that stretch reads MRQPDSSLPRTGQDHTLSPYEPELGEVPSNDLSMADLDNVNKTG. The active-site Nucleophile is T45.

The protein belongs to the peptidase T1B family. The 20S proteasome core is composed of 14 alpha and 14 beta subunits that assemble into four stacked heptameric rings, resulting in a barrel-shaped structure. The two inner rings, each composed of seven catalytic beta subunits, are sandwiched by two outer rings, each composed of seven alpha subunits. The catalytic chamber with the active sites is on the inside of the barrel. Has a gated structure, the ends of the cylinder being occluded by the N-termini of the alpha-subunits. Is capped at one or both ends by the proteasome regulatory ATPase, PAN.

It localises to the cytoplasm. It carries out the reaction Cleavage of peptide bonds with very broad specificity.. With respect to regulation, the formation of the proteasomal ATPase PAN-20S proteasome complex, via the docking of the C-termini of PAN into the intersubunit pockets in the alpha-rings, triggers opening of the gate for substrate entry. Interconversion between the open-gate and close-gate conformations leads to a dynamic regulation of the 20S proteasome proteolysis activity. Component of the proteasome core, a large protease complex with broad specificity involved in protein degradation. The sequence is that of Proteasome subunit beta from Natronomonas pharaonis (strain ATCC 35678 / DSM 2160 / CIP 103997 / JCM 8858 / NBRC 14720 / NCIMB 2260 / Gabara) (Halobacterium pharaonis).